The following is a 198-amino-acid chain: Guanylate kinase (198 aa).

Positions 4 to 186 constitute a Guanylate kinase-like domain; it reads PRPVVLSGPS…AYATLKQALS (183 aa). Position 14–19 (14–19) interacts with ATP; that stretch reads GAGKST. 37-51 is a substrate binding site; that stretch reads SHTTRNPRPGEEDGK. Catalysis depends on residues R44, R137, and R148. 171–172 is an ATP binding site; that stretch reads ND.

This sequence belongs to the guanylate kinase family. Monomer. Interacts with RD3. In terms of tissue distribution, widely expressed. In retina is expressed in inner segment, outer nuclear layer, outer plexiform layer, inner plexiform layer, and ganglion cell layer (at protein level).

It localises to the photoreceptor inner segment. The protein localises to the cytoplasm. It is found in the cytosol. The protein resides in the mitochondrion. The catalysed reaction is GMP + ATP = GDP + ADP. Its function is as follows. Catalyzes the phosphorylation of GMP to GDP. Essential enzyme for recycling GMP and indirectly, cyclic GMP (cGMP). Involved in the cGMP metabolism in photoreceptors. The sequence is that of Guanylate kinase from Mus musculus (Mouse).